The primary structure comprises 188 residues: Ribosome maturation factor RimM (188 aa).

A PRC barrel domain is found at 103–177; it reads EEGWYYADLI…RVVIDPPAGT (75 aa).

It belongs to the RimM family. As to quaternary structure, binds ribosomal protein uS19.

The protein resides in the cytoplasm. Its function is as follows. An accessory protein needed during the final step in the assembly of 30S ribosomal subunit, possibly for assembly of the head region. Essential for efficient processing of 16S rRNA. May be needed both before and after RbfA during the maturation of 16S rRNA. It has affinity for free ribosomal 30S subunits but not for 70S ribosomes. The protein is Ribosome maturation factor RimM of Parvibaculum lavamentivorans (strain DS-1 / DSM 13023 / NCIMB 13966).